The following is a 166-amino-acid chain: NAD(P)H-quinone oxidoreductase subunit I, chloroplastic (166 aa).

4Fe-4S ferredoxin-type domains follow at residues 55–84 (GRIHFEFDKCIACEVCVRVCPIDLPVVDWK) and 95–124 (LNYSIDFGICIFCGNCVEYCPTNCLSMTEE). Residues Cys-64, Cys-67, Cys-70, Cys-74, Cys-104, Cys-107, Cys-110, and Cys-114 each coordinate [4Fe-4S] cluster.

Belongs to the complex I 23 kDa subunit family. NDH is composed of at least 16 different subunits, 5 of which are encoded in the nucleus. It depends on [4Fe-4S] cluster as a cofactor.

The protein resides in the plastid. It localises to the chloroplast thylakoid membrane. It carries out the reaction a plastoquinone + NADH + (n+1) H(+)(in) = a plastoquinol + NAD(+) + n H(+)(out). The catalysed reaction is a plastoquinone + NADPH + (n+1) H(+)(in) = a plastoquinol + NADP(+) + n H(+)(out). Its function is as follows. NDH shuttles electrons from NAD(P)H:plastoquinone, via FMN and iron-sulfur (Fe-S) centers, to quinones in the photosynthetic chain and possibly in a chloroplast respiratory chain. The immediate electron acceptor for the enzyme in this species is believed to be plastoquinone. Couples the redox reaction to proton translocation, and thus conserves the redox energy in a proton gradient. The protein is NAD(P)H-quinone oxidoreductase subunit I, chloroplastic of Chamaechaenactis scaposa (Fullstem).